Reading from the N-terminus, the 312-residue chain is Olfactory receptor 2L2 (312 aa).

Over 1 to 24 (MENYNQTSTDFILLGLFPQSRIGL) the chain is Extracellular. Residue asparagine 5 is glycosylated (N-linked (GlcNAc...) asparagine). Residues 25 to 48 (FVFTLIFLIFLMALIGNLSMILLI) traverse the membrane as a helical segment. The Cytoplasmic portion of the chain corresponds to 49–56 (FLDIHLHT). A helical transmembrane segment spans residues 57–78 (PMYFLLSQLSLIDLNYISTIVP). Topologically, residues 79–99 (KMVYDFLYGNKSISFTGCGIQ) are extracellular. An N-linked (GlcNAc...) asparagine glycan is attached at asparagine 88. Cysteines 96 and 188 form a disulfide. The chain crosses the membrane as a helical span at residues 100-119 (SFFFLTLAVAEGLLLTSMAY). Residues 120 to 138 (DRYVAICFPLHYPIRISKR) lie on the Cytoplasmic side of the membrane. A helical membrane pass occupies residues 139 to 157 (VCVMMITGSWMISSINSCA). The Extracellular segment spans residues 158-194 (HTVYALCIPYCKSRAINHFFCDVPAMLTLACTDTWVY). A helical transmembrane segment spans residues 195-218 (ESTVFLSSTIFLVLPFTGIACSYG). Over 219–235 (RVLLAVYRMHSAEGRKK) the chain is Cytoplasmic. A helical membrane pass occupies residues 236–258 (AYSTCSTHLTVVSFYYAPFAYTY). Residues 259-271 (VRPRSLRSPTEDK) lie on the Extracellular side of the membrane. The helical transmembrane segment at 272–291 (ILAVFYTILTPMLNPIIYSL) threads the bilayer. The Cytoplasmic portion of the chain corresponds to 292-312 (RNKEVMGALTQVIQKIFSVKM).

Belongs to the G-protein coupled receptor 1 family.

Its subcellular location is the cell membrane. In terms of biological role, odorant receptor. In Homo sapiens (Human), this protein is Olfactory receptor 2L2 (OR2L2).